The following is an 89-amino-acid chain: MAHKKGTGSTRNGRDSNAKRLGVKRYGGELVHPGHILVRQRGTKFHPGVNVRIGGDDTLYSVVTGIVTFERYGKWRQKVSVYPAEVAAQ.

Residues 1 to 24 (MAHKKGTGSTRNGRDSNAKRLGVK) form a disordered region.

This sequence belongs to the bacterial ribosomal protein bL27 family.

This chain is Large ribosomal subunit protein bL27, found in Synechococcus sp. (strain JA-2-3B'a(2-13)) (Cyanobacteria bacterium Yellowstone B-Prime).